The primary structure comprises 52 residues: Large ribosomal subunit protein bL33 (52 aa).

This sequence belongs to the bacterial ribosomal protein bL33 family.

This Anaeromyxobacter dehalogenans (strain 2CP-C) protein is Large ribosomal subunit protein bL33.